Here is a 637-residue protein sequence, read N- to C-terminus: MPVSKREQSKDTGDPCALPKLPIPPLKQTLDMYLTCMGHLVPEDQFRKTKAVVEKFGAPGGVGETLQKKLLERSEQKANWVYDYWLEDMYLNNRLALPVNSSPVMVFHKQNFKGQSDVLRFAANLISGVLEYKALIDGRALPVEHARGQLAGTPLCMDQYNKVFTSYRLPGTKTDTLVAQKSTVMPEPEHIIVACKNQFFVLDVMVNFRRLNEKDLYTQLERIRKMADIEEERQPPIGLLTSDGRTQWAEARNILIKDSTNRDSLDMIERCLCLVCLDEETATELNDSNRALLMLHGGGTDKNGGNRWYDKPMQFVIGADGCCGVVCEHSPFEGIVLVQCSEYLLRYMRGSPSKLVRAASMSELPAPRRLRWKCSPDIQTFLSASADRLQKLVKNLDMNVHKFTGYGKEFIKRQKMSPDAYVQVALQFTFYRCHGRLVPTYESASIRRFQEGRVDNIRSSTPEALAFVKAMASGSKITDAEKMELLWTAIKAQTNYTILAITGMAIDNHLLGLREIAKELKLEKPELFSDTTYATSIHFTLSTSQVPTTEEMFCCYGPVVPNGYGACYNPQTDHILFCVSSFRECAETSSDLFVKTLEGCLKEMQDLCRKCNTEVKPADSTQRMEGNPKVMKNGSKS.

The segment covering 1-13 (MPVSKREQSKDTG) has biased composition (basic and acidic residues). The interval 1–20 (MPVSKREQSKDTGDPCALPK) is disordered. His329 serves as the catalytic Proton acceptor. Residues 407–419 (GKEF…MSPD), Ser445, and Gln545 contribute to the CoA site.

This sequence belongs to the carnitine/choline acetyltransferase family.

It carries out the reaction choline + acetyl-CoA = acetylcholine + CoA. In terms of biological role, catalyzes the reversible synthesis of acetylcholine (ACh) from acetyl CoA and choline at cholinergic synapses. The chain is Choline O-acetyltransferase (chat) from Danio rerio (Zebrafish).